The following is a 68-amino-acid chain: Large ribosomal subunit protein uL29 (68 aa).

It belongs to the universal ribosomal protein uL29 family.

This chain is Large ribosomal subunit protein uL29, found in Chlorobaculum tepidum (strain ATCC 49652 / DSM 12025 / NBRC 103806 / TLS) (Chlorobium tepidum).